The following is a 122-amino-acid chain: Small ribosomal subunit protein uS13 (122 aa).

A disordered region spans residues Gly95 to Lys122.

This sequence belongs to the universal ribosomal protein uS13 family. As to quaternary structure, part of the 30S ribosomal subunit. Forms a loose heterodimer with protein S19. Forms two bridges to the 50S subunit in the 70S ribosome.

Functionally, located at the top of the head of the 30S subunit, it contacts several helices of the 16S rRNA. In the 70S ribosome it contacts the 23S rRNA (bridge B1a) and protein L5 of the 50S subunit (bridge B1b), connecting the 2 subunits; these bridges are implicated in subunit movement. Contacts the tRNAs in the A and P-sites. The protein is Small ribosomal subunit protein uS13 of Desulfovibrio desulfuricans (strain ATCC 27774 / DSM 6949 / MB).